The chain runs to 209 residues: Thymidine kinase (209 aa).

ATP-binding positions include 9–16 (AAMNAGKS) and 88–91 (DEAQ). Glutamate 89 (proton acceptor) is an active-site residue. Zn(2+) is bound by residues cysteine 146, cysteine 148, cysteine 183, and histidine 186.

It belongs to the thymidine kinase family. As to quaternary structure, homotetramer.

It is found in the cytoplasm. The catalysed reaction is thymidine + ATP = dTMP + ADP + H(+). This is Thymidine kinase from Legionella pneumophila subsp. pneumophila (strain Philadelphia 1 / ATCC 33152 / DSM 7513).